The sequence spans 93 residues: MSTNTDLSLSSYDEGQGSKFIRKARETPFVPIGMAGFAAIVAYGLYKLKSRGNTKMSIHLIHMRVAAQGFVVGAMTLGMGYSMYQEFWAKRKP.

S2 bears the N-acetylserine mark. Residues 2 to 93 (STNTDLSLSS…YQEFWAKRKP (92 aa)) enclose the HIG1 domain. At S8 the chain carries Phosphoserine. 2 helical membrane passes run 28 to 48 (PFVPIGMAGFAAIVAYGLYKL) and 69 to 89 (GFVVGAMTLGMGYSMYQEFWA). Residues 90–93 (KRKP) lie on the Mitochondrial matrix side of the membrane.

In terms of assembly, associates with cytochrome c oxidase (COX, complex IV); proposed complex component. Also associates with respiratory chain supercomplexes. As to expression, expressed in brain and spinal cord.

Its subcellular location is the mitochondrion membrane. It localises to the mitochondrion inner membrane. Proposed subunit of cytochrome c oxidase (COX, complex IV), which is the terminal component of the mitochondrial respiratory chain that catalyzes the reduction of oxygen to water. May play a role in the assembly of respiratory supercomplexes. In Rattus norvegicus (Rat), this protein is HIG1 domain family member 1A, mitochondrial (Higd1a).